We begin with the raw amino-acid sequence, 624 residues long: Mannosyl-oligosaccharide 1,2-alpha-mannosidase MNS3 (624 aa).

At 1-43 (MSKSLPYSVKDIHYDNAKFRHRSPLKVFSQSLLTLSTKRNYAS) the chain is on the cytoplasmic side. The chain crosses the membrane as a helical; Signal-anchor for type II membrane protein span at residues 44-64 (CSTGKFLILILFFGVACLMLM). Topologically, residues 65–624 (SKSPNESGLN…AHPLPIRRNT (560 aa)) are lumenal. N69 and N114 each carry an N-linked (GlcNAc...) asparagine glycan. A disordered region spans residues 91-123 (LRKPPRLPPRLSPDEGQLRGSSTNGSTISNSDP). The span at 110 to 121 (GSSTNGSTISNS) shows a compositional bias: low complexity. E212 functions as the Proton donor in the catalytic mechanism. N236 is a glycosylation site (N-linked (GlcNAc...) asparagine). The active site involves D357. A glycan (N-linked (GlcNAc...) asparagine) is linked at N377. A disulfide bond links C428 and C471. E485 (proton donor) is an active-site residue. An N-linked (GlcNAc...) asparagine glycan is attached at N503. E526 is a catalytic residue. A Ca(2+)-binding site is contributed by T613.

Belongs to the glycosyl hydrolase 47 family. Requires Ca(2+) as cofactor. Mn(2+) is required as a cofactor. The cofactor is Mg(2+). As to expression, expressed in flowers, siliques, stems, leaves, roots, stamens and sepals.

The protein resides in the golgi apparatus. It is found in the cis-Golgi network membrane. The enzyme catalyses N(4)-(alpha-D-Man-(1-&gt;2)-alpha-D-Man-(1-&gt;2)-alpha-D-Man-(1-&gt;3)-[alpha-D-Man-(1-&gt;2)-alpha-D-Man-(1-&gt;3)-[alpha-D-Man-(1-&gt;2)-alpha-D-Man-(1-&gt;6)]-alpha-D-Man-(1-&gt;6)]-beta-D-Man-(1-&gt;4)-beta-D-GlcNAc-(1-&gt;4)-beta-D-GlcNAc)-L-asparaginyl-[protein] (N-glucan mannose isomer 9A1,2,3B1,2,3) + 4 H2O = N(4)-(alpha-D-Man-(1-&gt;3)-[alpha-D-Man-(1-&gt;3)-[alpha-D-Man-(1-&gt;6)]-alpha-D-Man-(1-&gt;6)]-beta-D-Man-(1-&gt;4)-beta-D-GlcNAc-(1-&gt;4)-beta-D-GlcNAc)-L-asparaginyl-[protein] (N-glucan mannose isomer 5A1,2) + 4 beta-D-mannose. It catalyses the reaction N(4)-(alpha-D-Man-(1-&gt;2)-alpha-D-Man-(1-&gt;2)-alpha-D-Man-(1-&gt;3)-[alpha-D-Man-(1-&gt;3)-[alpha-D-Man-(1-&gt;2)-alpha-D-Man-(1-&gt;6)]-alpha-D-Man-(1-&gt;6)]-beta-D-Man-(1-&gt;4)-beta-D-GlcNAc-(1-&gt;4)-beta-D-GlcNAc)-L-asparaginyl-[protein] (N-glucan mannose isomer 8A1,2,3B1,3) + 3 H2O = N(4)-(alpha-D-Man-(1-&gt;3)-[alpha-D-Man-(1-&gt;3)-[alpha-D-Man-(1-&gt;6)]-alpha-D-Man-(1-&gt;6)]-beta-D-Man-(1-&gt;4)-beta-D-GlcNAc-(1-&gt;4)-beta-D-GlcNAc)-L-asparaginyl-[protein] (N-glucan mannose isomer 5A1,2) + 3 beta-D-mannose. It carries out the reaction N(4)-(alpha-D-Man-(1-&gt;2)-alpha-D-Man-(1-&gt;2)-alpha-D-Man-(1-&gt;3)-[alpha-D-Man-(1-&gt;2)-alpha-D-Man-(1-&gt;3)-[alpha-D-Man-(1-&gt;2)-alpha-D-Man-(1-&gt;6)]-alpha-D-Man-(1-&gt;6)]-beta-D-Man-(1-&gt;4)-beta-D-GlcNAc-(1-&gt;4)-beta-D-GlcNAc)-L-asparaginyl-[protein] (N-glucan mannose isomer 9A1,2,3B1,2,3) + H2O = N(4)-(alpha-D-Man-(1-&gt;2)-alpha-D-Man-(1-&gt;2)-alpha-D-Man-(1-&gt;3)-[alpha-D-Man-(1-&gt;3)-[alpha-D-Man-(1-&gt;2)-alpha-D-Man-(1-&gt;6)]-alpha-D-Man-(1-&gt;6)]-beta-D-Man-(1-&gt;4)-beta-D-GlcNAc-(1-&gt;4)-beta-D-GlcNAc)-L-asparaginyl-[protein] (N-glucan mannose isomer 8A1,2,3B1,3) + beta-D-mannose. It participates in protein modification; protein glycosylation. With respect to regulation, inhibited by kifunensine and 1-deoxymannojirimycin, but not by swainsonine. Functionally, class I alpha-mannosidase essential for early N-glycan processing. Removes preferentially alpha-1,2-linked mannose residues from Man(9)GlcNAc(2) to produce Man(8)GlcNAc(2). Involved in root development and cell wall biosynthesis. The protein is Mannosyl-oligosaccharide 1,2-alpha-mannosidase MNS3 (MNS3) of Arabidopsis thaliana (Mouse-ear cress).